The primary structure comprises 23 residues: Basic phospholipase A2 CB2 (23 aa).

Requires Ca(2+) as cofactor. Post-translationally, contains 7 disulfide bonds. In terms of tissue distribution, expressed by the venom gland.

The protein localises to the secreted. The catalysed reaction is a 1,2-diacyl-sn-glycero-3-phosphocholine + H2O = a 1-acyl-sn-glycero-3-phosphocholine + a fatty acid + H(+). Its function is as follows. Snake venom phospholipase A2 (PLA2) that shows presynaptic neurotoxicity. PLA2 catalyzes the calcium-dependent hydrolysis of the 2-acyl groups in 3-sn-phosphoglycerides. This is Basic phospholipase A2 CB2 from Crotalus durissus cumanensis (South American rattlesnake).